A 213-amino-acid chain; its full sequence is Glutathione S-transferase DHAR2 (213 aa).

C6 is subject to S-glutathionyl cysteine. Positions 8 and 19 each coordinate glutathione. Residues K8 and D19 each contribute to the L-ascorbate site. The 74-residue stretch at 10–83 folds into the GST N-terminal domain; that stretch reads AVGAPDVLGD…DVIVGLLEEK (74 aa). C20 carries the post-translational modification S-glutathionyl cysteine. The active-site Nucleophile is the C20. The Glutathione-binding signature appears at 20–25; the sequence is CPFSQR. Residues K47, V60, S73, H160, and W207 each contribute to the glutathione site. The 130-residue stretch at 84–213 folds into the GST C-terminal domain; the sequence is YPEPSLKTPP…VAGWESKVNA (130 aa). K210 contributes to the L-ascorbate binding site.

This sequence belongs to the GST superfamily. DHAR family. In terms of assembly, monomer. Spontaneous S-glutathionylation in the presence of oxidized glutathione (GSSG).

Its subcellular location is the cytoplasm. It is found in the cytosol. The enzyme catalyses RX + glutathione = an S-substituted glutathione + a halide anion + H(+). It carries out the reaction L-dehydroascorbate + 2 glutathione = glutathione disulfide + L-ascorbate. Its function is as follows. Displays a dual function. As a soluble protein, exhibits glutathione-dependent thiol transferase and dehydroascorbate (DHA) reductase activities. Exhibits glutathione-dependent thiol transferase and dehydroascorbate (DHA) reductase activities. Key component of the ascorbate recycling system. Involved in the redox homeostasis, especially in scavenging of ROS under oxidative stresses. Plays a role in ozone tolerance. The chain is Glutathione S-transferase DHAR2 (DHAR2) from Arabidopsis thaliana (Mouse-ear cress).